The chain runs to 362 residues: MKKSLELKLQQMLERYEEVGRLLSEASIIADQNQFKSLSKEYAQLEPVSQCYESYLEAKNNLDSLNELLESDDKDLATMAEEEIDTVKKQIEELDEQLQWHLIPKDPDDERNIYLEVRAGTGGDEAAIFAGDLFRMYSRYAESQGWQIELISASHGEHGGYKEIIAKISGQAVYSQLKFESGAHRVQRVPETESQGRVHTSACTVAIMPEVDEINDIQINPDDLRIDTYRSSGAGGQHVNKTDSAIRITHIPTGVVVECQDERSQHKNRAKAMSLLKTRLLDAEVSKQKQEQAQTRKSLVGTGDRSERIRTYNFPQGRLTDHRINLTIYQLSDIMEGNLSLVIDPLKREYHAELLADLGRHD.

Residue Q237 is modified to N5-methylglutamine.

Belongs to the prokaryotic/mitochondrial release factor family. Post-translationally, methylated by PrmC. Methylation increases the termination efficiency of RF1.

The protein localises to the cytoplasm. Functionally, peptide chain release factor 1 directs the termination of translation in response to the peptide chain termination codons UAG and UAA. This is Peptide chain release factor 1 from Legionella pneumophila (strain Paris).